Here is a 231-residue protein sequence, read N- to C-terminus: UPF0173 metal-dependent hydrolase AF_1265 (231 aa).

The protein belongs to the UPF0173 family.

The protein is UPF0173 metal-dependent hydrolase AF_1265 of Archaeoglobus fulgidus (strain ATCC 49558 / DSM 4304 / JCM 9628 / NBRC 100126 / VC-16).